Consider the following 91-residue polypeptide: Small ribosomal subunit protein bS18 (91 aa).

Belongs to the bacterial ribosomal protein bS18 family. Part of the 30S ribosomal subunit. Forms a tight heterodimer with protein bS6.

Binds as a heterodimer with protein bS6 to the central domain of the 16S rRNA, where it helps stabilize the platform of the 30S subunit. The sequence is that of Small ribosomal subunit protein bS18 from Paraburkholderia phytofirmans (strain DSM 17436 / LMG 22146 / PsJN) (Burkholderia phytofirmans).